An 891-amino-acid polypeptide reads, in one-letter code: Alanine--tRNA ligase (891 aa).

Zn(2+)-binding residues include His-564, His-568, Cys-677, and His-681.

The protein belongs to the class-II aminoacyl-tRNA synthetase family. Zn(2+) is required as a cofactor.

The protein resides in the cytoplasm. The enzyme catalyses tRNA(Ala) + L-alanine + ATP = L-alanyl-tRNA(Ala) + AMP + diphosphate. Catalyzes the attachment of alanine to tRNA(Ala) in a two-step reaction: alanine is first activated by ATP to form Ala-AMP and then transferred to the acceptor end of tRNA(Ala). Also edits incorrectly charged Ser-tRNA(Ala) and Gly-tRNA(Ala) via its editing domain. This chain is Alanine--tRNA ligase, found in Bradyrhizobium sp. (strain ORS 278).